The following is a 576-amino-acid chain: MNIQALINDKVSQALEAAGAPAGSPAAVRQSAKIQFGDYQANGVMGVAKKLGTNPREFAQKVIDVLDLDGIAEKVEIAGPGFINIFLDKSWLAARAEEALTDDRIGVAAEKQQNIVVDYSAPNVAKEMHVGHLRSTIIGDAVVRTLEFLGHNVVRANHIGDWGTQFGMLIANLERVQNETGEVSMELADLEGFYRESKKLYDEDEEFAVRARAFVVKLQSGDEYCAEMWKKLVDVTMVQNQINYDRLNVSLTRDNVMGESMYNYMLPGIVADLKEKGLAVESDGAQVVFLDEYKNKDGDPMGVIIQKRDGGFLYTTTDIACAKYRFEQLNADRVLYFIDSRQHQHLMQAWSIVRKAGYVPEEVTLEHHAFGMMLGKDGRPFKTRAGGTVRLADLLDESEVRAAKLIEAKNPDLDTAEKDKIAKTVAMAAVKYADLSKHRTTDYIFDWDNMLAFEGNTAPYMQYAYTRVASIFKRADVNLADLTHPIVINDEKEQALLSTLLQFEEAVLNVSREGQPHLMCTYLFELAGKFSSFYEACPILNAEEAVKQSRLKLALLTAKTIKQGLDLLGIETLERM.

A 'HIGH' region motif is present at residues 122–132 (PNVAKEMHVGH).

It belongs to the class-I aminoacyl-tRNA synthetase family. In terms of assembly, monomer.

The protein resides in the cytoplasm. It catalyses the reaction tRNA(Arg) + L-arginine + ATP = L-arginyl-tRNA(Arg) + AMP + diphosphate. This Photobacterium profundum (strain SS9) protein is Arginine--tRNA ligase.